Here is a 123-residue protein sequence, read N- to C-terminus: Large ribosomal subunit protein bL20 (123 aa).

This sequence belongs to the bacterial ribosomal protein bL20 family.

In terms of biological role, binds directly to 23S ribosomal RNA and is necessary for the in vitro assembly process of the 50S ribosomal subunit. It is not involved in the protein synthesizing functions of that subunit. The polypeptide is Large ribosomal subunit protein bL20 (Chlamydia trachomatis serovar L2b (strain UCH-1/proctitis)).